The chain runs to 398 residues: Protein trichome birefringence-like 45 (398 aa).

A helical; Signal-anchor for type II membrane protein membrane pass occupies residues 1-21 (MAAVQCLTFLFLFLLQNATSA). Residues 131–133 (GDS) carry the GDS motif motif. Positions 375-389 (DCSHWCLPGLPDTWN) match the DCXHWCLPGXXDXWN motif motif.

It belongs to the PC-esterase family. TBL subfamily.

It localises to the membrane. May act as a bridging protein that binds pectin and other cell wall polysaccharides. Probably involved in maintaining esterification of pectins. May be involved in the specific O-acetylation of cell wall polymers. In Arabidopsis thaliana (Mouse-ear cress), this protein is Protein trichome birefringence-like 45 (TBL45).